Consider the following 318-residue polypeptide: Acetyl-coenzyme A carboxylase carboxyl transferase subunit alpha (318 aa).

Positions 41 to 295 (RLTTKSQELT…KRQLIADLGS (255 aa)) constitute a CoA carboxyltransferase C-terminal domain.

It belongs to the AccA family. In terms of assembly, acetyl-CoA carboxylase is a heterohexamer composed of biotin carboxyl carrier protein (AccB), biotin carboxylase (AccC) and two subunits each of ACCase subunit alpha (AccA) and ACCase subunit beta (AccD).

Its subcellular location is the cytoplasm. It catalyses the reaction N(6)-carboxybiotinyl-L-lysyl-[protein] + acetyl-CoA = N(6)-biotinyl-L-lysyl-[protein] + malonyl-CoA. Its pathway is lipid metabolism; malonyl-CoA biosynthesis; malonyl-CoA from acetyl-CoA: step 1/1. Functionally, component of the acetyl coenzyme A carboxylase (ACC) complex. First, biotin carboxylase catalyzes the carboxylation of biotin on its carrier protein (BCCP) and then the CO(2) group is transferred by the carboxyltransferase to acetyl-CoA to form malonyl-CoA. This Idiomarina loihiensis (strain ATCC BAA-735 / DSM 15497 / L2-TR) protein is Acetyl-coenzyme A carboxylase carboxyl transferase subunit alpha.